The primary structure comprises 616 residues: Dihydroxy-acid dehydratase (616 aa).

Aspartate 81 serves as a coordination point for Mg(2+). Cysteine 122 is a binding site for [2Fe-2S] cluster. Mg(2+) contacts are provided by aspartate 123 and lysine 124. The residue at position 124 (lysine 124) is an N6-carboxylysine. Cysteine 195 contacts [2Fe-2S] cluster. Residue glutamate 491 coordinates Mg(2+). Serine 517 acts as the Proton acceptor in catalysis.

This sequence belongs to the IlvD/Edd family. In terms of assembly, homodimer. [2Fe-2S] cluster is required as a cofactor. Mg(2+) serves as cofactor.

The catalysed reaction is (2R)-2,3-dihydroxy-3-methylbutanoate = 3-methyl-2-oxobutanoate + H2O. It carries out the reaction (2R,3R)-2,3-dihydroxy-3-methylpentanoate = (S)-3-methyl-2-oxopentanoate + H2O. The protein operates within amino-acid biosynthesis; L-isoleucine biosynthesis; L-isoleucine from 2-oxobutanoate: step 3/4. Its pathway is amino-acid biosynthesis; L-valine biosynthesis; L-valine from pyruvate: step 3/4. Functions in the biosynthesis of branched-chain amino acids. Catalyzes the dehydration of (2R,3R)-2,3-dihydroxy-3-methylpentanoate (2,3-dihydroxy-3-methylvalerate) into 2-oxo-3-methylpentanoate (2-oxo-3-methylvalerate) and of (2R)-2,3-dihydroxy-3-methylbutanoate (2,3-dihydroxyisovalerate) into 2-oxo-3-methylbutanoate (2-oxoisovalerate), the penultimate precursor to L-isoleucine and L-valine, respectively. The sequence is that of Dihydroxy-acid dehydratase from Blochmanniella pennsylvanica (strain BPEN).